Here is an 86-residue protein sequence, read N- to C-terminus: Protein GOLVEN 1 (86 aa).

The N-terminal stretch at 1–29 (MSCSLRSGLVIVFCFILLLLSSNVGCASA) is a signal peptide. The propeptide occupies 30–70 (ARRLRSHKHHHHKVASLDVFNGGERRRALGGVETGEEVVVM). Residue Y72 is modified to Sulfotyrosine. A Hydroxyproline modification is found at P80. A propeptide spanning residues 84 to 86 (EKS) is cleaved from the precursor.

This sequence belongs to the RGF family. Binds to LRR receptor-like serine/threonine-protein kinases to trigger their dimerization with SERK proteins and subsequent signaling. As to expression, expressed in stems, hypocotyls, cotyledons, leaves, flowers, shoot apex, siliques, stamens and petals.

It localises to the endoplasmic reticulum. The protein resides in the secreted. In terms of biological role, signaling peptide (root growth factor) that regulates the pattern of root growth and lateral root development by modulating the length and the number of cortical cells in the root apical meristem (RAM), and the anticlinal asymmetric cell divisions in lateral root initiation cells. Also involved in the regulation of hypocotyl bending and root gravitropism in a PIN2-traffic dependent manner, thus influencing the formation of auxin gradients. Maintains the postembryonic root stem cell niche. This Arabidopsis thaliana (Mouse-ear cress) protein is Protein GOLVEN 1.